Consider the following 230-residue polypeptide: MGRGKIEIKRIENSTNRQVTFCKRRNGLLKKAYELSVLCDAEVALIVFSTRGRLYEYANNNIRSTIERYKKACSDSTNTSTVQEINAAYYQQESAKLRQQIQTIQNSNRNLMGDSLSSLSVKELKQVENRLEKAISRIRSKKHELLLVEIENAQKREIELDNENIYLRTKVAEVERYQQHHHQMVSGSEINAIEALASRNYFAHSIMTAGSGSGNGGSYSDPDKKILHLG.

Residues 3–57 (RGKIEIKRIENSTNRQVTFCKRRNGLLKKAYELSVLCDAEVALIVFSTRGRLYEY) form the MADS-box domain. Residues 87–177 (AAYYQQESAK…RTKVAEVERY (91 aa)) enclose the K-box domain. Residues 211–230 (SGSGNGGSYSDPDKKILHLG) form a disordered region. Positions 221 to 230 (DPDKKILHLG) are enriched in basic and acidic residues.

As to quaternary structure, interacts with AGL15 and AGL16.

The protein localises to the nucleus. In terms of biological role, probable transcription factor. Is required, together with TT16/AGL32 for the maternal control of endothelium formation, which is essential for female gametophyte development and fertilization, and seed formation. This is Agamous-like MADS-box protein AGL11 (AGL11) from Arabidopsis thaliana (Mouse-ear cress).